A 252-amino-acid polypeptide reads, in one-letter code: Hydroxyacylglutathione hydrolase (252 aa).

Residues His54, His56, Asp58, His59, His111, Asp130, and His170 each contribute to the Zn(2+) site.

This sequence belongs to the metallo-beta-lactamase superfamily. Glyoxalase II family. As to quaternary structure, monomer. Zn(2+) serves as cofactor.

The catalysed reaction is an S-(2-hydroxyacyl)glutathione + H2O = a 2-hydroxy carboxylate + glutathione + H(+). Its pathway is secondary metabolite metabolism; methylglyoxal degradation; (R)-lactate from methylglyoxal: step 2/2. Functionally, thiolesterase that catalyzes the hydrolysis of S-D-lactoyl-glutathione to form glutathione and D-lactic acid. This is Hydroxyacylglutathione hydrolase from Francisella philomiragia subsp. philomiragia (strain ATCC 25017 / CCUG 19701 / FSC 153 / O#319-036).